Here is a 318-residue protein sequence, read N- to C-terminus: Electron transfer flavoprotein subunit alpha (318 aa).

257–285 contributes to the FAD binding site; the sequence is LYIALGISGAIQHRAGMQTSKTIVAVNKD.

This sequence belongs to the ETF alpha-subunit/FixB family. In terms of assembly, heterodimer of an alpha and a beta subunit. Requires FAD as cofactor.

Functionally, the electron transfer flavoprotein serves as a specific electron acceptor for other dehydrogenases. It transfers the electrons to the main respiratory chain via ETF-ubiquinone oxidoreductase (ETF dehydrogenase). In Mycobacterium leprae (strain TN), this protein is Electron transfer flavoprotein subunit alpha (etfA).